The following is a 599-amino-acid chain: Putative sensor histidine kinase NtrY-like (599 aa).

4 consecutive transmembrane segments (helical) span residues 17–37, 44–64, 85–105, and 285–305; these read ILILALAIASIISVCTTFYVI, FSTIIGFLLIDLAIFLILGIL, IVIAFSLVAAIPTIIVSVFSV, and IMFIFIALLLLFVAINFGVLF. Residues 307–361 enclose the HAMP domain; that stretch reads AKIVKPIKKLVTATDKVKDGDLTVQVPENEVDKDEIGTLYAAFNRMIKQLSRQQR. A Histidine kinase domain is found at 378-589; that stretch reads KVAHEIKNPL…IIDIKFDLKE (212 aa). His381 carries the post-translational modification Phosphohistidine; by autocatalysis.

The protein localises to the cell membrane. The catalysed reaction is ATP + protein L-histidine = ADP + protein N-phospho-L-histidine.. In terms of biological role, member of the two-component regulatory system RP614/RP562. In Rickettsia prowazekii (strain Madrid E), this protein is Putative sensor histidine kinase NtrY-like.